Reading from the N-terminus, the 712-residue chain is Protein SDA1 homolog (712 aa).

Threonine 234 is subject to Phosphothreonine. Serine 236 is subject to Phosphoserine. 2 disordered regions span residues 488–573 and 662–712; these read TIDI…DMRI and VNEH…KKMK. Acidic residues-rich tracts occupy residues 491–501 and 516–559; these read IESEDDTDSND and GADD…ESGE. Positions 560 to 572 are enriched in basic and acidic residues; it reads ESAKAKKEKKDMR. 2 stretches are compositionally biased toward basic residues: residues 671 to 692 and 700 to 712; these read REKR…KVKK and ALRK…KKMK.

It belongs to the SDA1 family.

It localises to the nucleus. Its subcellular location is the nucleolus. Required for 60S pre-ribosomal subunits export to the cytoplasm. This is Protein SDA1 homolog (Mys45A) from Drosophila melanogaster (Fruit fly).